Here is a 101-residue protein sequence, read N- to C-terminus: Small ribosomal subunit protein uS14 (101 aa).

This sequence belongs to the universal ribosomal protein uS14 family. In terms of assembly, part of the 30S ribosomal subunit. Contacts proteins S3 and S10.

Binds 16S rRNA, required for the assembly of 30S particles and may also be responsible for determining the conformation of the 16S rRNA at the A site. The protein is Small ribosomal subunit protein uS14 of Ruegeria pomeroyi (strain ATCC 700808 / DSM 15171 / DSS-3) (Silicibacter pomeroyi).